We begin with the raw amino-acid sequence, 196 residues long: FMN-dependent NADH:quinone oxidoreductase (196 aa).

Ser10 lines the FMN pocket.

This sequence belongs to the azoreductase type 1 family. As to quaternary structure, homodimer. The cofactor is FMN.

It catalyses the reaction 2 a quinone + NADH + H(+) = 2 a 1,4-benzosemiquinone + NAD(+). The enzyme catalyses N,N-dimethyl-1,4-phenylenediamine + anthranilate + 2 NAD(+) = 2-(4-dimethylaminophenyl)diazenylbenzoate + 2 NADH + 2 H(+). Quinone reductase that provides resistance to thiol-specific stress caused by electrophilic quinones. Its function is as follows. Also exhibits azoreductase activity. Catalyzes the reductive cleavage of the azo bond in aromatic azo compounds to the corresponding amines. This chain is FMN-dependent NADH:quinone oxidoreductase, found in Cereibacter sphaeroides (strain KD131 / KCTC 12085) (Rhodobacter sphaeroides).